A 227-amino-acid chain; its full sequence is Phosphoribosylformylglycinamidine synthase subunit PurQ (227 aa).

Residues 2-226 (KFAVIQFPGS…VKAWKEEQVN (225 aa)) form the Glutamine amidotransferase type-1 domain. Cysteine 86 functions as the Nucleophile in the catalytic mechanism. Active-site residues include histidine 195 and glutamate 197.

As to quaternary structure, part of the FGAM synthase complex composed of 1 PurL, 1 PurQ and 2 PurS subunits.

It localises to the cytoplasm. The enzyme catalyses N(2)-formyl-N(1)-(5-phospho-beta-D-ribosyl)glycinamide + L-glutamine + ATP + H2O = 2-formamido-N(1)-(5-O-phospho-beta-D-ribosyl)acetamidine + L-glutamate + ADP + phosphate + H(+). It catalyses the reaction L-glutamine + H2O = L-glutamate + NH4(+). Its pathway is purine metabolism; IMP biosynthesis via de novo pathway; 5-amino-1-(5-phospho-D-ribosyl)imidazole from N(2)-formyl-N(1)-(5-phospho-D-ribosyl)glycinamide: step 1/2. Functionally, part of the phosphoribosylformylglycinamidine synthase complex involved in the purines biosynthetic pathway. Catalyzes the ATP-dependent conversion of formylglycinamide ribonucleotide (FGAR) and glutamine to yield formylglycinamidine ribonucleotide (FGAM) and glutamate. The FGAM synthase complex is composed of three subunits. PurQ produces an ammonia molecule by converting glutamine to glutamate. PurL transfers the ammonia molecule to FGAR to form FGAM in an ATP-dependent manner. PurS interacts with PurQ and PurL and is thought to assist in the transfer of the ammonia molecule from PurQ to PurL. The polypeptide is Phosphoribosylformylglycinamidine synthase subunit PurQ (Listeria monocytogenes serotype 4a (strain HCC23)).